The chain runs to 206 residues: Ribosomal RNA small subunit methyltransferase G (206 aa).

Residues Gly-73, Leu-78, 124 to 125 (VE), and Arg-139 each bind S-adenosyl-L-methionine.

Belongs to the methyltransferase superfamily. RNA methyltransferase RsmG family.

The protein resides in the cytoplasm. The catalysed reaction is guanosine(527) in 16S rRNA + S-adenosyl-L-methionine = N(7)-methylguanosine(527) in 16S rRNA + S-adenosyl-L-homocysteine. Specifically methylates the N7 position of guanine in position 527 of 16S rRNA. The protein is Ribosomal RNA small subunit methyltransferase G of Idiomarina loihiensis (strain ATCC BAA-735 / DSM 15497 / L2-TR).